A 481-amino-acid chain; its full sequence is MASAAASSAFSLLKSTGAVASSAGTRARASLLPIPSTSVSARPLGFSATLDSRRFSLHVASKVESVRGKGSRGVVSMAKKSVGDLTSADLKGKKVFVRADLNVPLDDNQTITDDTRIRAAIPTIKYLIENGAKVILSTHLGRPKGVTPKFSLAPLVPRLSELLGIEVTKADDCIGPEVESLVASLPEGGVLLLENVRFYKEEEKNDPEFAKKLASLADLYVNDAFGTAHRAHASTEGVTKFLKPSVAGFLLQKELDYLVGAVSNPKRPFAAIVGGSKVSSKIGVIESLLEKCDILLLGGGMIFTFYKAQGLSVGSSLVEEDKLELATELLAKAKAKGVSLLLPTDVVVADKFAPDANSKIVPASGIEDGWMGLDIGPDSIKTFNEALDTTQTVIWNGPMGVFEMEKFAAGTEAIANKLAELSEKGVTTIIGGGDSVAAVEKVGVAGVMSHISTGGGASLELLEGKVLPGVIALDEAIPVTV.

A chloroplast-targeting transit peptide spans 1 to 75 (MASAAASSAF…VRGKGSRGVV (75 aa)). At serine 81 the chain carries Phosphoserine. The (2R)-3-phosphoglycerate site is built by alanine 99, aspartate 100, asparagine 102, arginine 116, threonine 138, histidine 139, glycine 141, arginine 142, arginine 197, histidine 229, and arginine 230. Residue glycine 275 coordinates ADP. A CDP-binding site is contributed by glycine 275. AMP-binding residues include lysine 277 and lysine 281. Lysine 281 provides a ligand contact to ATP. Glycine 299 lines the ADP pocket. Glycine 299 is a binding site for CDP. Residues glycine 300 and glycine 372 each coordinate AMP. ATP is bound by residues glycine 300 and glycine 372. CDP is bound by residues glycine 397 and phenylalanine 402. An ADP-binding site is contributed by phenylalanine 402. AMP is bound at residue glutamate 403. The ATP site is built by glutamate 403, aspartate 434, and serine 435. Aspartate 434 is a binding site for Mg(2+).

It belongs to the phosphoglycerate kinase family. As to quaternary structure, monomer. Binds to FTSZ2-1 and FTSZ2-2. Mg(2+) is required as a cofactor.

It localises to the plastid. The protein resides in the chloroplast. The catalysed reaction is (2R)-3-phosphoglycerate + ATP = (2R)-3-phospho-glyceroyl phosphate + ADP. It functions in the pathway carbohydrate biosynthesis; Calvin cycle. May trigger the phosphorylation of FTSZ2-1 and FTSZ2-2. The chain is Phosphoglycerate kinase 1, chloroplastic from Arabidopsis thaliana (Mouse-ear cress).